The primary structure comprises 205 residues: uncharacterized protein (205 aa).

The first 40 residues, 1-40, serve as a signal peptide directing secretion; that stretch reads MSAGKSYRKKMKQRRMNMKISKYALGILMLSLVFVLSACG. A disordered region spans residues 44 to 82; sequence STKESTHDNHSDSSTHEEMDHSGSADVPEGLQESKNPKY. Over residues 47–66 the composition is skewed to basic and acidic residues; it reads ESTHDNHSDSSTHEEMDHSG.

This is an uncharacterized protein from Bacillus subtilis (strain 168).